Consider the following 418-residue polypeptide: ATP phosphoribosyltransferase regulatory subunit (418 aa).

Belongs to the class-II aminoacyl-tRNA synthetase family. HisZ subfamily. As to quaternary structure, heteromultimer composed of HisG and HisZ subunits.

Its subcellular location is the cytoplasm. Its pathway is amino-acid biosynthesis; L-histidine biosynthesis; L-histidine from 5-phospho-alpha-D-ribose 1-diphosphate: step 1/9. Required for the first step of histidine biosynthesis. May allow the feedback regulation of ATP phosphoribosyltransferase activity by histidine. This Halothermothrix orenii (strain H 168 / OCM 544 / DSM 9562) protein is ATP phosphoribosyltransferase regulatory subunit.